Here is a 499-residue protein sequence, read N- to C-terminus: ADP,ATP carrier protein 5 (499 aa).

The next 11 membrane-spanning stretches (helical) occupy residues 25–45, 61–81, 93–113, 148–168, 183–203, 223–243, 286–306, 327–347, 356–376, 380–400, and 468–488; these read LGKF…QNIL, IAGF…VIIY, IFYY…FVIY, YIVY…LLFW, FYTF…FLMM, ITLV…CCVL, LWLL…VEAV, LYIL…NNVM, AVIS…LIVF, ILSL…VSIG, and SISP…IYAV.

Belongs to the ADP/ATP translocase tlc family.

The protein localises to the cell membrane. Provides the rickettsial cell with host ATP in exchange for rickettsial ADP. This is an obligate exchange system. This energy acquiring activity is an important component of rickettsial parasitism. The protein is ADP,ATP carrier protein 5 (tlcE) of Rickettsia felis (strain ATCC VR-1525 / URRWXCal2) (Rickettsia azadi).